A 498-amino-acid chain; its full sequence is ATP synthase subunit beta, chloroplastic (498 aa).

G172–T179 lines the ATP pocket.

This sequence belongs to the ATPase alpha/beta chains family. As to quaternary structure, F-type ATPases have 2 components, CF(1) - the catalytic core - and CF(0) - the membrane proton channel. CF(1) has five subunits: alpha(3), beta(3), gamma(1), delta(1), epsilon(1). CF(0) has four main subunits: a(1), b(1), b'(1) and c(9-12).

The protein localises to the plastid. It is found in the chloroplast thylakoid membrane. The enzyme catalyses ATP + H2O + 4 H(+)(in) = ADP + phosphate + 5 H(+)(out). Its function is as follows. Produces ATP from ADP in the presence of a proton gradient across the membrane. The catalytic sites are hosted primarily by the beta subunits. The sequence is that of ATP synthase subunit beta, chloroplastic from Solanum bulbocastanum (Wild potato).